Here is a 405-residue protein sequence, read N- to C-terminus: Tryptophan synthase beta chain (405 aa).

Lysine 95 carries the post-translational modification N6-(pyridoxal phosphate)lysine.

Belongs to the TrpB family. In terms of assembly, tetramer of two alpha and two beta chains. It depends on pyridoxal 5'-phosphate as a cofactor.

The catalysed reaction is (1S,2R)-1-C-(indol-3-yl)glycerol 3-phosphate + L-serine = D-glyceraldehyde 3-phosphate + L-tryptophan + H2O. The protein operates within amino-acid biosynthesis; L-tryptophan biosynthesis; L-tryptophan from chorismate: step 5/5. Its function is as follows. The beta subunit is responsible for the synthesis of L-tryptophan from indole and L-serine. The chain is Tryptophan synthase beta chain from Pseudomonas putida (strain ATCC 700007 / DSM 6899 / JCM 31910 / BCRC 17059 / LMG 24140 / F1).